The chain runs to 197 residues: Translation machinery-associated protein 22 (197 aa).

The region spanning 103-174 (IRIKRVERNK…DVREFLIKNY (72 aa)) is the SUI1 domain.

This sequence belongs to the DENR family. In terms of assembly, interacts with the 40S ribosomal subunit.

Its subcellular location is the cytoplasm. This chain is Translation machinery-associated protein 22 (tma22), found in Botryotinia fuckeliana (strain B05.10) (Noble rot fungus).